Here is a 97-residue protein sequence, read N- to C-terminus: Defensin-like protein 245 (97 aa).

A signal peptide spans 1 to 24; that stretch reads MKFAAILLVTCVLFSLLPSHLSQG. 4 cysteine pairs are disulfide-bonded: C39–C96, C50–C79, C58–C89, and C77–C91.

The protein belongs to the DEFL family. In terms of tissue distribution, flower buds and roots.

It is found in the secreted. The protein is Defensin-like protein 245 (SCRL4) of Arabidopsis thaliana (Mouse-ear cress).